Consider the following 444-residue polypeptide: ATP-dependent protease ATPase subunit HslU (444 aa).

ATP is bound by residues Ile-18, 60-65, Asp-256, Glu-322, and Arg-394; that span reads GVGKTE.

This sequence belongs to the ClpX chaperone family. HslU subfamily. As to quaternary structure, a double ring-shaped homohexamer of HslV is capped on each side by a ring-shaped HslU homohexamer. The assembly of the HslU/HslV complex is dependent on binding of ATP.

The protein resides in the cytoplasm. Functionally, ATPase subunit of a proteasome-like degradation complex; this subunit has chaperone activity. The binding of ATP and its subsequent hydrolysis by HslU are essential for unfolding of protein substrates subsequently hydrolyzed by HslV. HslU recognizes the N-terminal part of its protein substrates and unfolds these before they are guided to HslV for hydrolysis. The sequence is that of ATP-dependent protease ATPase subunit HslU from Klebsiella pneumoniae (strain 342).